A 78-amino-acid polypeptide reads, in one-letter code: NAD(P)H-quinone oxidoreductase subunit O (78 aa).

Belongs to the complex I NdhO subunit family. As to quaternary structure, NDH-1 can be composed of about 15 different subunits; different subcomplexes with different compositions have been identified which probably have different functions.

The protein localises to the cell inner membrane. It carries out the reaction a plastoquinone + NADH + (n+1) H(+)(in) = a plastoquinol + NAD(+) + n H(+)(out). It catalyses the reaction a plastoquinone + NADPH + (n+1) H(+)(in) = a plastoquinol + NADP(+) + n H(+)(out). In terms of biological role, NDH-1 shuttles electrons from an unknown electron donor, via FMN and iron-sulfur (Fe-S) centers, to quinones in the respiratory and/or the photosynthetic chain. The immediate electron acceptor for the enzyme in this species is believed to be plastoquinone. Couples the redox reaction to proton translocation, and thus conserves the redox energy in a proton gradient. Cyanobacterial NDH-1 also plays a role in inorganic carbon-concentration. This is NAD(P)H-quinone oxidoreductase subunit O from Gloeobacter violaceus (strain ATCC 29082 / PCC 7421).